We begin with the raw amino-acid sequence, 155 residues long: DNA gyrase inhibitor (155 aa).

The protein belongs to the DNA gyrase inhibitor family. In terms of assembly, interacts with DNA gyrase.

The protein resides in the cytoplasm. Its function is as follows. Inhibits the supercoiling activity of DNA gyrase. Acts by inhibiting DNA gyrase at an early step, prior to (or at the step of) binding of DNA by the gyrase. It protects cells against toxins that target DNA gyrase, by inhibiting activity of these toxins and reducing the formation of lethal double-strand breaks in the cell. The sequence is that of DNA gyrase inhibitor from Salmonella typhi.